We begin with the raw amino-acid sequence, 472 residues long: Kynureninase 2 (472 aa).

Residues leucine 133, threonine 134, 162 to 165, aspartate 247, histidine 250, and tyrosine 272 contribute to the pyridoxal 5'-phosphate site; that span reads FPSD. Position 273 is an N6-(pyridoxal phosphate)lysine (lysine 273). Pyridoxal 5'-phosphate is bound by residues tryptophan 314 and asparagine 342.

The protein belongs to the kynureninase family. In terms of assembly, homodimer. Pyridoxal 5'-phosphate is required as a cofactor.

It is found in the cytoplasm. The enzyme catalyses L-kynurenine + H2O = anthranilate + L-alanine + H(+). The catalysed reaction is 3-hydroxy-L-kynurenine + H2O = 3-hydroxyanthranilate + L-alanine + H(+). It participates in amino-acid degradation; L-kynurenine degradation; L-alanine and anthranilate from L-kynurenine: step 1/1. It functions in the pathway cofactor biosynthesis; NAD(+) biosynthesis; quinolinate from L-kynurenine: step 2/3. Its function is as follows. Catalyzes the cleavage of L-kynurenine (L-Kyn) and L-3-hydroxykynurenine (L-3OHKyn) into anthranilic acid (AA) and 3-hydroxyanthranilic acid (3-OHAA), respectively. This is Kynureninase 2 (kyn-2) from Neurospora crassa (strain ATCC 24698 / 74-OR23-1A / CBS 708.71 / DSM 1257 / FGSC 987).